The following is a 78-amino-acid chain: Protein Class8-like (78 aa).

An N-terminal signal peptide occupies residues 1 to 19 (MRTLVVLLIGAVLLCSANA). Residues 20–36 (FLDELLAESVNDMTDKR) constitute a propeptide that is removed on maturation. The ShKT domain occupies 38 to 78 (CFDKYKSNICGGVISPAHCVRRSGRMAKFAKENCAHFCGFC). 3 cysteine pairs are disulfide-bonded: cysteine 38–cysteine 78, cysteine 47–cysteine 71, and cysteine 56–cysteine 75.

Expressed in ganglion neurons residing in the mesoglea (observed in both planulae and primary polyps). Not expressed in nematocytes.

In terms of biological role, probable neuropeptide. In Nematostella vectensis (Starlet sea anemone), this protein is Protein Class8-like.